The following is a 365-amino-acid chain: Ferrochelatase (365 aa).

Fe cation is bound by residues H211 and E292.

It belongs to the ferrochelatase family.

It is found in the cytoplasm. It carries out the reaction heme b + 2 H(+) = protoporphyrin IX + Fe(2+). It functions in the pathway porphyrin-containing compound metabolism; protoheme biosynthesis; protoheme from protoporphyrin-IX: step 1/1. Functionally, catalyzes the ferrous insertion into protoporphyrin IX. The chain is Ferrochelatase from Aromatoleum aromaticum (strain DSM 19018 / LMG 30748 / EbN1) (Azoarcus sp. (strain EbN1)).